The following is a 208-amino-acid chain: Small ribosomal subunit protein uS4 (208 aa).

The S4 RNA-binding domain occupies 99 to 165 (RRLDNVVFQL…PRLKEILSSL (67 aa)).

The protein belongs to the universal ribosomal protein uS4 family. As to quaternary structure, part of the 30S ribosomal subunit. Contacts protein S5. The interaction surface between S4 and S5 is involved in control of translational fidelity.

Functionally, one of the primary rRNA binding proteins, it binds directly to 16S rRNA where it nucleates assembly of the body of the 30S subunit. With S5 and S12 plays an important role in translational accuracy. The protein is Small ribosomal subunit protein uS4 of Desulfitobacterium hafniense (strain Y51).